Reading from the N-terminus, the 242-residue chain is Carbendazim hydrolyzing esterase (242 aa).

Catalysis depends on Ser-77, which acts as the Acyl-ester intermediate.

Belongs to the AB hydrolase superfamily.

The protein resides in the secreted. It carries out the reaction carbendazim + H2O = 2-aminobenzimidazole + methanol + CO2. The enzyme catalyses carbendazim + H2O = N-(1H-1,3-benzodiazol-2-yl)carbamate + methanol + H(+). The catalysed reaction is N-(1H-1,3-benzodiazol-2-yl)carbamate + H(+) = 2-aminobenzimidazole + CO2. Catalyzes the hydrolysis of the fungicide carbendazim (methyl-1H-benzimidazol-2-ylcarbamate or MBC) to 2-aminobenzimidazole (2-AB). Following hydrolysis of the carbamate ester, the carbamate decarboxylates spontaneously. Can hydrolyze model carboxylesters such as methyl salicylate, alpha-naphthyl acetate and p-nitrophenyl acetate. In addition, shows substantial hydrolytic activity in vitro against widespread pollutants with carboxylester, carbamate and amide linkages, such as dimethyl phthalate, propanil and chlorpropham. The sequence is that of Carbendazim hydrolyzing esterase from Nocardioides sp. (strain SG-4G).